The primary structure comprises 779 residues: Transcriptional regulator QRICH1 (779 aa).

An N-acetylmethionine modification is found at Met-1. One can recognise a CARD domain in the interval 6-48; it reads ENTISFEEYIRVKARSVPQHRMKEFLDSLASKGPEALQEFQQT. Disordered regions lie at residues 141–163 and 219–242; these read QGQA…PSPS and ALSP…TASV. Ser-346 is subject to Phosphoserine. Glycyl lysine isopeptide (Lys-Gly) (interchain with G-Cter in SUMO2) cross-links involve residues Lys-354 and Lys-359. Over residues 420–430 the composition is skewed to low complexity; it reads QQQPQQQTPQE. Residues 420–443 are disordered; the sequence is QQQPQQQTPQEQTPPPPQQQQQQQ. A Phosphoserine modification is found at Ser-467.

The protein localises to the nucleus. It localises to the cytoplasm. The protein resides in the cell membrane. Its function is as follows. Transcriptional regulator that acts as a mediator of the integrated stress response (ISR) through transcriptional control of protein homeostasis under conditions of ER stress. Controls the outcome of the unfolded protein response (UPR), an ER-stress response pathway that either promotes recovery of ER homeostasis and cell survival, or triggers the terminal UPR which elicits programmed cell death when ER stress is prolonged and unresolved. ER stress induces QRICH1 translation by a ribosome translation re-initiation mechanism in response to EIF2S1/eIF-2-alpha phosphorylation, and stress-induced QRICH1 regulates a transcriptional program associated with protein translation, protein secretion-mediated proteotoxicity and cell death during the terminal UPR. May cooperate with ATF4 transcription factor signaling to regulate ER homeostasis which is critical for cell viability. Up-regulates CASP3/caspase-3 activity in epithelial cells under ER stress. Central regulator of proteotoxicity associated with ER stress-mediated inflammatory diseases in the intestines and liver. Involved in chondrocyte hypertrophy, a process required for normal longitudinal bone growth. This Bos taurus (Bovine) protein is Transcriptional regulator QRICH1 (QRICH1).